The primary structure comprises 92 residues: Protein RESPONSE TO LOW SULFUR 4 (92 aa).

Residues 8 to 63 (VMVAASEVEELRQKNGEMEKAVEEMRKEMLQLWRRTQVAEEAEEHLCSQLAELEAE) adopt a coiled-coil conformation.

In terms of biological role, required for flower development in short-day conditions. The polypeptide is Protein RESPONSE TO LOW SULFUR 4 (Arabidopsis thaliana (Mouse-ear cress)).